The primary structure comprises 476 residues: 3-isopropylmalate dehydratase large subunit (476 aa).

[4Fe-4S] cluster contacts are provided by C353, C413, and C416.

This sequence belongs to the aconitase/IPM isomerase family. LeuC type 1 subfamily. Heterodimer of LeuC and LeuD. [4Fe-4S] cluster is required as a cofactor.

It carries out the reaction (2R,3S)-3-isopropylmalate = (2S)-2-isopropylmalate. It participates in amino-acid biosynthesis; L-leucine biosynthesis; L-leucine from 3-methyl-2-oxobutanoate: step 2/4. Catalyzes the isomerization between 2-isopropylmalate and 3-isopropylmalate, via the formation of 2-isopropylmaleate. This Yersinia enterocolitica serotype O:8 / biotype 1B (strain NCTC 13174 / 8081) protein is 3-isopropylmalate dehydratase large subunit.